The following is a 233-amino-acid chain: Phosphatidylserine decarboxylase proenzyme (233 aa).

The active-site Schiff-base intermediate with substrate; via pyruvic acid is the Ser190. Position 190 is a pyruvic acid (Ser); by autocatalysis (Ser190).

It belongs to the phosphatidylserine decarboxylase family. PSD-A subfamily. In terms of assembly, heterodimer of a large membrane-associated beta subunit and a small pyruvoyl-containing alpha subunit. It depends on pyruvate as a cofactor. Is synthesized initially as an inactive proenzyme. Formation of the active enzyme involves a self-maturation process in which the active site pyruvoyl group is generated from an internal serine residue via an autocatalytic post-translational modification. Two non-identical subunits are generated from the proenzyme in this reaction, and the pyruvate is formed at the N-terminus of the alpha chain, which is derived from the carboxyl end of the proenzyme. The post-translation cleavage follows an unusual pathway, termed non-hydrolytic serinolysis, in which the side chain hydroxyl group of the serine supplies its oxygen atom to form the C-terminus of the beta chain, while the remainder of the serine residue undergoes an oxidative deamination to produce ammonia and the pyruvoyl prosthetic group on the alpha chain.

It localises to the cell membrane. The catalysed reaction is a 1,2-diacyl-sn-glycero-3-phospho-L-serine + H(+) = a 1,2-diacyl-sn-glycero-3-phosphoethanolamine + CO2. The protein operates within phospholipid metabolism; phosphatidylethanolamine biosynthesis; phosphatidylethanolamine from CDP-diacylglycerol: step 2/2. Catalyzes the formation of phosphatidylethanolamine (PtdEtn) from phosphatidylserine (PtdSer). This Xanthobacter autotrophicus (strain ATCC BAA-1158 / Py2) protein is Phosphatidylserine decarboxylase proenzyme.